Reading from the N-terminus, the 413-residue chain is Multifunctional CCA protein (413 aa).

2 residues coordinate ATP: Gly8 and Arg11. Residues Gly8 and Arg11 each coordinate CTP. Asp21 and Asp23 together coordinate Mg(2+). Positions 91, 137, and 140 each coordinate ATP. Residues Arg91, Arg137, and Arg140 each coordinate CTP. The region spanning 228–329 (TGIHTLMTLS…VKLFDNIDAW (102 aa)) is the HD domain.

It belongs to the tRNA nucleotidyltransferase/poly(A) polymerase family. Bacterial CCA-adding enzyme type 1 subfamily. As to quaternary structure, monomer. Can also form homodimers and oligomers. It depends on Mg(2+) as a cofactor. The cofactor is Ni(2+).

It carries out the reaction a tRNA precursor + 2 CTP + ATP = a tRNA with a 3' CCA end + 3 diphosphate. The enzyme catalyses a tRNA with a 3' CCA end + 2 CTP + ATP = a tRNA with a 3' CCACCA end + 3 diphosphate. In terms of biological role, catalyzes the addition and repair of the essential 3'-terminal CCA sequence in tRNAs without using a nucleic acid template. Adds these three nucleotides in the order of C, C, and A to the tRNA nucleotide-73, using CTP and ATP as substrates and producing inorganic pyrophosphate. tRNA 3'-terminal CCA addition is required both for tRNA processing and repair. Also involved in tRNA surveillance by mediating tandem CCA addition to generate a CCACCA at the 3' terminus of unstable tRNAs. While stable tRNAs receive only 3'-terminal CCA, unstable tRNAs are marked with CCACCA and rapidly degraded. The chain is Multifunctional CCA protein from Enterobacter sp. (strain 638).